A 703-amino-acid polypeptide reads, in one-letter code: MATTHTLLSFDDLEFLLHRKDLTDLYGERCGTLNLVINPYELFLPDELDDDCCDDPFNCCFPDVYASIGTEYSYIDPPELIHEEHCATNGTWPNGDPCEPILPPFTITGTHHYYATKPGEVVSGILSKLGSSWDPSLRSTADVSNSFTFRAESDGPGSAEIVTEEQGTVVQQQPAPAPTALATLATASTGKSVEQEWMTFFSYHTSINWSTVESQGKILYSQALNPSINPYLDHIAKLYSTWSGGIDVRFTVSGSGVFGGKLAALLVPPGVEPIESVSMLQYPHVLFDARQTEPVIFTIPDIRKTLFHSMDETDTTKLVINPYENGVENKTTCSITVETRPSADFTFALLKPPGSLIKHGSIPSDLIPRNSAHWMGNRWWSTISGFSVQPRVFQSNRHFDFDSTTTGWSTPYYVPIEIKIQGKVGSNNKWFHVIDTDKALVPGIPDGWPDTTIPDETKATNGNFSYGESYRAGSTTIKPNENSTHFKGTYICGTLSTVEIPENDEQQIKTEAEKKSQTMYVVTADFKDTIVKPQHKISPQKLVVYFDGPEKDLTMSATLSPLGYTLVDEQPVGSVSSRVVRIATLPEAFTQGGNYPIFYVNKIKVGYFDRATTNCYNSQILMTSQRLAEGNYNLPPDSLAVYRITDSSSQWFDIGINHDGFSYVGLSDLPNDLSFPLTSTFMGVQLARVKLASKVKAHTITAK.

Belongs to the caliciviridae capsid protein family. Homodimer. Homomultimer. Interacts with the minor capsid protein VP2. May bind to VP3 and Vpg proteins. In terms of processing, cleaved by the viral protease to produce mature capsid protein.

It is found in the virion. The protein localises to the host cytoplasm. Capsid protein self assembles to form an icosahedral capsid with a T=3 symmetry, about 38 nm in diameter, and consisting of 180 capsid proteins. A smaller form of capsid with a diameter of 23 nm might be capsid proteins assembled as icosahedron with T=1 symmetry. The capsid encapsulates the genomic RNA and is decorated with VP2 proteins. The protein is Capsid protein VP1 of San Miguel sea lion virus serotype 4 (SMSV-4).